The chain runs to 136 residues: Small ribosomal subunit protein uS9 (136 aa).

Residues 111-136 (DARRTEPHKPSRSTKGPRAKRQKSYR) are disordered. Basic residues predominate over residues 120–136 (PSRSTKGPRAKRQKSYR).

The protein belongs to the universal ribosomal protein uS9 family.

The polypeptide is Small ribosomal subunit protein uS9 (rps9) (Methanocaldococcus jannaschii (strain ATCC 43067 / DSM 2661 / JAL-1 / JCM 10045 / NBRC 100440) (Methanococcus jannaschii)).